A 468-amino-acid chain; its full sequence is bZIP transcription factor 14 (468 aa).

2 disordered regions span residues 55-149 and 234-272; these read SRRK…EGRA and SPQS…LGKD. Composition is skewed to low complexity over residues 64 to 82 and 95 to 106; these read SFVS…SSGS and VTAASTESVSSS. Residues 112-128 are compositionally biased toward basic and acidic residues; that stretch reads KKADTDDRVQRSRERNR. A bZIP 1 domain is found at 117–165; it reads DDRVQRSRERNRIHARKTRQRKKEQMQSLEGRATDLKHEQIRLKQIINE. The interval 119-139 is basic motif 1; that stretch reads RVQRSRERNRIHARKTRQRKK. The segment covering 129–138 has biased composition (basic residues); it reads IHARKTRQRK. Positions 145-159 are leucine-zipper 1; the sequence is LEGRATDLKHEQIRL. Over residues 247–256 the composition is skewed to polar residues; it reads ASTSDVSGDE. The bZIP 2 domain maps to 279 to 333; the sequence is EELDQIRRERNRMHAKRTRDRKRIFTEEMAEMCRILEEENHLLRVHLGGLDSDFK. Residues 285–312 form a basic motif 2 region; that stretch reads RRERNRMHAKRTRDRKRIFTEEMAEMCR. The segment at 313 to 320 is leucine-zipper 2; it reads ILEEENHL. Positions 400–468 are disordered; that stretch reads ERQQREAERK…TTSLAAPVGW (69 aa). The span at 401–410 shows a compositional bias: basic and acidic residues; the sequence is RQQREAERKV. Positions 417–426 are enriched in low complexity; the sequence is SAASDTSTSD.

It belongs to the bZIP family.

Its subcellular location is the nucleus. Transcriptional activator which binds to the C-box-like motif 5'-TGACGT-3' and A-box-like motif 5'-GTACGTA-3' of target promoters to positively regulate the expression of genes involved in the tricarboxylic acid (TCA) cycle in response to nitrogen starvation. May also regulate the TCA cycle during day-to-night transitions. In Phaeodactylum tricornutum (strain CCAP 1055/1), this protein is bZIP transcription factor 14.